The following is a 2148-amino-acid chain: General transcription factor 3C polypeptide 1 (2148 aa).

Acidic residues predominate over residues 473 to 487; that stretch reads GEEAFLSDSESEEES. Disordered regions lie at residues 473–568 and 587–609; these read GEEA…FDPH and NPKEGGGSQKGGRHGSGQDKPHK. Residues 491–502 show a composition bias toward basic residues; it reads GKRRGRGSRGHS. Lys-533 is covalently cross-linked (Glycyl lysine isopeptide (Lys-Gly) (interchain with G-Cter in SUMO2)). Ser-666 carries the post-translational modification Phosphoserine. Disordered regions lie at residues 717–771 and 818–863; these read STAN…EKMG and TGEQ…SSWE. 2 stretches are compositionally biased toward basic and acidic residues: residues 759–770 and 825–835; these read ESTRVKKTDEKM and HSERKTGKQEP. Residues Lys-769 and Lys-832 each participate in a glycyl lysine isopeptide (Lys-Gly) (interchain with G-Cter in SUMO2) cross-link. Ser-1062 carries the post-translational modification Phosphoserine. Over residues 1186-1195 the composition is skewed to basic and acidic residues; it reads EHFELDREPT. Disordered regions lie at residues 1186-1238, 1597-1627, 1823-1881, 1893-1928, and 2127-2148; these read EHFE…KKLR, KSLGKDGGLDDDDEEEDLDEGSGTKRQSVEV, KASG…LPAK, SPRPGTEEQTEAQAQFAAPEDAGAEGPRQESQESVG, and PRPSHSCYQSSAQPSTGVATSR. Thr-1195 is subject to Phosphothreonine. Residues 1198–1214 show a composition bias toward basic residues; sequence RNRKVRGGKSQKRKRLK. Over residues 1228–1238 the composition is skewed to basic and acidic residues; the sequence is EHPEAKSKKLR. Acidic residues predominate over residues 1605–1616; sequence LDDDDEEEDLDE. A phosphoserine mark is found at Ser-1624, Ser-1853, and Ser-1893. Positions 1903–1912 are enriched in low complexity; that stretch reads EAQAQFAAPE. Over residues 2132–2148 the composition is skewed to polar residues; it reads SCYQSSAQPSTGVATSR.

Belongs to the TFIIIC subunit 1 family. As to quaternary structure, part of the TFIIIC subcomplex TFIIIC2, consisting of six subunits, GTF3C1, GTF3C2, GTF3C3, GTF3C4, GTF3C5 and GTF3C6. Interacts with IGHMBP2. Interacts with MAF1.

Its subcellular location is the nucleus. In terms of biological role, required for RNA polymerase III-mediated transcription. Component of TFIIIC that initiates transcription complex assembly on tRNA and is required for transcription of 5S rRNA and other stable nuclear and cytoplasmic RNAs. Binds to the box B promoter element. This chain is General transcription factor 3C polypeptide 1 (Gtf3c1), found in Rattus norvegicus (Rat).